A 254-amino-acid polypeptide reads, in one-letter code: Imidazole glycerol phosphate synthase subunit HisF (254 aa).

Catalysis depends on residues Asp12 and Asp131.

It belongs to the HisA/HisF family. In terms of assembly, heterodimer of HisH and HisF.

The protein resides in the cytoplasm. The enzyme catalyses 5-[(5-phospho-1-deoxy-D-ribulos-1-ylimino)methylamino]-1-(5-phospho-beta-D-ribosyl)imidazole-4-carboxamide + L-glutamine = D-erythro-1-(imidazol-4-yl)glycerol 3-phosphate + 5-amino-1-(5-phospho-beta-D-ribosyl)imidazole-4-carboxamide + L-glutamate + H(+). It functions in the pathway amino-acid biosynthesis; L-histidine biosynthesis; L-histidine from 5-phospho-alpha-D-ribose 1-diphosphate: step 5/9. IGPS catalyzes the conversion of PRFAR and glutamine to IGP, AICAR and glutamate. The HisF subunit catalyzes the cyclization activity that produces IGP and AICAR from PRFAR using the ammonia provided by the HisH subunit. This is Imidazole glycerol phosphate synthase subunit HisF from Rhizorhabdus wittichii (strain DSM 6014 / CCUG 31198 / JCM 15750 / NBRC 105917 / EY 4224 / RW1) (Sphingomonas wittichii).